Reading from the N-terminus, the 169-residue chain is Crossover junction endodeoxyribonuclease RuvC (169 aa).

Residues Asp-7, Glu-67, and Asp-140 contribute to the active site. Mg(2+) is bound by residues Asp-7, Glu-67, and Asp-140.

The protein belongs to the RuvC family. Homodimer which binds Holliday junction (HJ) DNA. The HJ becomes 2-fold symmetrical on binding to RuvC with unstacked arms; it has a different conformation from HJ DNA in complex with RuvA. In the full resolvosome a probable DNA-RuvA(4)-RuvB(12)-RuvC(2) complex forms which resolves the HJ. Mg(2+) is required as a cofactor.

The protein localises to the cytoplasm. It carries out the reaction Endonucleolytic cleavage at a junction such as a reciprocal single-stranded crossover between two homologous DNA duplexes (Holliday junction).. The RuvA-RuvB-RuvC complex processes Holliday junction (HJ) DNA during genetic recombination and DNA repair. Endonuclease that resolves HJ intermediates. Cleaves cruciform DNA by making single-stranded nicks across the HJ at symmetrical positions within the homologous arms, yielding a 5'-phosphate and a 3'-hydroxyl group; requires a central core of homology in the junction. The consensus cleavage sequence is 5'-(A/T)TT(C/G)-3'. Cleavage occurs on the 3'-side of the TT dinucleotide at the point of strand exchange. HJ branch migration catalyzed by RuvA-RuvB allows RuvC to scan DNA until it finds its consensus sequence, where it cleaves and resolves the cruciform DNA. The polypeptide is Crossover junction endodeoxyribonuclease RuvC (Clostridioides difficile (strain 630) (Peptoclostridium difficile)).